Consider the following 49-residue polypeptide: MRVQVTLACTETGDRNYITTKNKRTNPERIELKKYSPRLKRHTLHRETK.

The protein belongs to the bacterial ribosomal protein bL33 family.

This Shouchella clausii (strain KSM-K16) (Alkalihalobacillus clausii) protein is Large ribosomal subunit protein bL33B.